The primary structure comprises 348 residues: Protein RecA (348 aa).

64-71 (GPESSGKT) is a binding site for ATP. Residues 325-335 (YEIDGSSKEPL) show a composition bias toward basic and acidic residues. A disordered region spans residues 325-348 (YEIDGSSKEPLDEKEETLSLLDDE).

The protein belongs to the RecA family.

The protein localises to the cytoplasm. Functionally, can catalyze the hydrolysis of ATP in the presence of single-stranded DNA, the ATP-dependent uptake of single-stranded DNA by duplex DNA, and the ATP-dependent hybridization of homologous single-stranded DNAs. It interacts with LexA causing its activation and leading to its autocatalytic cleavage. The protein is Protein RecA of Listeria monocytogenes serotype 1/2a (strain 10403S).